The sequence spans 1172 residues: Pesticidal crystal protein Cry1Ha (1172 aa).

The protein belongs to the delta endotoxin family.

Functionally, promotes colloidosmotic lysis by binding to the midgut epithelial cells of insects. This Bacillus thuringiensis protein is Pesticidal crystal protein Cry1Ha (cry1Ha).